A 225-amino-acid chain; its full sequence is Protein-L-isoaspartate O-methyltransferase (225 aa).

Ser-75 is an active-site residue.

It belongs to the methyltransferase superfamily. L-isoaspartyl/D-aspartyl protein methyltransferase family.

The protein localises to the cytoplasm. The catalysed reaction is [protein]-L-isoaspartate + S-adenosyl-L-methionine = [protein]-L-isoaspartate alpha-methyl ester + S-adenosyl-L-homocysteine. Functionally, catalyzes the methyl esterification of L-isoaspartyl residues in peptides and proteins that result from spontaneous decomposition of normal L-aspartyl and L-asparaginyl residues. It plays a role in the repair and/or degradation of damaged proteins. This Xylella fastidiosa (strain M23) protein is Protein-L-isoaspartate O-methyltransferase.